A 163-amino-acid chain; its full sequence is NADH-quinone oxidoreductase subunit I (163 aa).

2 consecutive 4Fe-4S ferredoxin-type domains span residues 53–83 (LRRY…IEAG) and 94–123 (VRYD…EGPN). [4Fe-4S] cluster is bound by residues cysteine 63, cysteine 66, cysteine 69, cysteine 73, cysteine 103, cysteine 106, cysteine 109, and cysteine 113.

The protein belongs to the complex I 23 kDa subunit family. NDH-1 is composed of 14 different subunits. Subunits NuoA, H, J, K, L, M, N constitute the membrane sector of the complex. [4Fe-4S] cluster serves as cofactor.

Its subcellular location is the cell inner membrane. The enzyme catalyses a quinone + NADH + 5 H(+)(in) = a quinol + NAD(+) + 4 H(+)(out). Its function is as follows. NDH-1 shuttles electrons from NADH, via FMN and iron-sulfur (Fe-S) centers, to quinones in the respiratory chain. The immediate electron acceptor for the enzyme in this species is believed to be ubiquinone. Couples the redox reaction to proton translocation (for every two electrons transferred, four hydrogen ions are translocated across the cytoplasmic membrane), and thus conserves the redox energy in a proton gradient. This is NADH-quinone oxidoreductase subunit I from Rhizobium johnstonii (strain DSM 114642 / LMG 32736 / 3841) (Rhizobium leguminosarum bv. viciae).